A 98-amino-acid chain; its full sequence is Integration host factor subunit alpha (98 aa).

A disordered region spans residues 51 to 71; sequence NFDLRDKNERPGRNPKTGEDI. Basic and acidic residues predominate over residues 53-69; the sequence is DLRDKNERPGRNPKTGE.

This sequence belongs to the bacterial histone-like protein family. As to quaternary structure, heterodimer of an alpha and a beta chain.

Functionally, this protein is one of the two subunits of integration host factor, a specific DNA-binding protein that functions in genetic recombination as well as in transcriptional and translational control. The sequence is that of Integration host factor subunit alpha from Vibrio cholerae serotype O1 (strain ATCC 39541 / Classical Ogawa 395 / O395).